The following is a 237-amino-acid chain: Ribonuclease PH (237 aa).

Residues R86 and 124–126 contribute to the phosphate site; that span reads GTR.

The protein belongs to the RNase PH family. Homohexameric ring arranged as a trimer of dimers.

It carries out the reaction tRNA(n+1) + phosphate = tRNA(n) + a ribonucleoside 5'-diphosphate. Phosphorolytic 3'-5' exoribonuclease that plays an important role in tRNA 3'-end maturation. Removes nucleotide residues following the 3'-CCA terminus of tRNAs; can also add nucleotides to the ends of RNA molecules by using nucleoside diphosphates as substrates, but this may not be physiologically important. Probably plays a role in initiation of 16S rRNA degradation (leading to ribosome degradation) during starvation. In Zymomonas mobilis subsp. mobilis (strain ATCC 31821 / ZM4 / CP4), this protein is Ribonuclease PH.